The sequence spans 274 residues: 4-diphosphocytidyl-2-C-methyl-D-erythritol kinase (274 aa).

Residue Lys-10 is part of the active site. ATP is bound at residue 101–111 (PTQAGLGGGSA). Asp-143 is an active-site residue.

The protein belongs to the GHMP kinase family. IspE subfamily.

It carries out the reaction 4-CDP-2-C-methyl-D-erythritol + ATP = 4-CDP-2-C-methyl-D-erythritol 2-phosphate + ADP + H(+). The protein operates within isoprenoid biosynthesis; isopentenyl diphosphate biosynthesis via DXP pathway; isopentenyl diphosphate from 1-deoxy-D-xylulose 5-phosphate: step 3/6. In terms of biological role, catalyzes the phosphorylation of the position 2 hydroxy group of 4-diphosphocytidyl-2C-methyl-D-erythritol. The sequence is that of 4-diphosphocytidyl-2-C-methyl-D-erythritol kinase from Helicobacter pylori (strain J99 / ATCC 700824) (Campylobacter pylori J99).